The chain runs to 387 residues: ATP phosphoribosyltransferase regulatory subunit (387 aa).

This sequence belongs to the class-II aminoacyl-tRNA synthetase family. HisZ subfamily. In terms of assembly, heteromultimer composed of HisG and HisZ subunits.

It localises to the cytoplasm. Its pathway is amino-acid biosynthesis; L-histidine biosynthesis; L-histidine from 5-phospho-alpha-D-ribose 1-diphosphate: step 1/9. Functionally, required for the first step of histidine biosynthesis. May allow the feedback regulation of ATP phosphoribosyltransferase activity by histidine. This is ATP phosphoribosyltransferase regulatory subunit from Methylobacillus flagellatus (strain ATCC 51484 / DSM 6875 / VKM B-1610 / KT).